Here is a 318-residue protein sequence, read N- to C-terminus: uncharacterized protein (318 aa).

Residues 2-22 (ILELIIVLVLLVLAFKSLKIL) form a helical membrane-spanning segment. Residues 295–318 (SDPEDKGVSEVETESQPAEKPEKH) are disordered.

This sequence belongs to the band 7/mec-2 family.

It localises to the membrane. This is an uncharacterized protein from Methanothermobacter thermautotrophicus (strain ATCC 29096 / DSM 1053 / JCM 10044 / NBRC 100330 / Delta H) (Methanobacterium thermoautotrophicum).